Here is a 369-residue protein sequence, read N- to C-terminus: Glutamate 5-kinase (369 aa).

Lysine 9 is an ATP binding site. 3 residues coordinate substrate: serine 49, aspartate 136, and asparagine 148. Residues 168 to 169 (TD) and 210 to 216 (TGGMLTK) each bind ATP. The PUA domain occupies 275-355 (QGEIYVDQGA…KGVVIHRDDW (81 aa)).

This sequence belongs to the glutamate 5-kinase family.

The protein resides in the cytoplasm. The enzyme catalyses L-glutamate + ATP = L-glutamyl 5-phosphate + ADP. The protein operates within amino-acid biosynthesis; L-proline biosynthesis; L-glutamate 5-semialdehyde from L-glutamate: step 1/2. Its function is as follows. Catalyzes the transfer of a phosphate group to glutamate to form L-glutamate 5-phosphate. This chain is Glutamate 5-kinase, found in Streptococcus sanguinis (strain SK36).